Reading from the N-terminus, the 260-residue chain is 23S rRNA (guanosine-2'-O-)-methyltransferase RlmB (260 aa).

S-adenosyl-L-methionine-binding residues include Gly-197, Ile-217, and Leu-226.

This sequence belongs to the class IV-like SAM-binding methyltransferase superfamily. RNA methyltransferase TrmH family. RlmB subfamily.

It is found in the cytoplasm. It catalyses the reaction guanosine(2251) in 23S rRNA + S-adenosyl-L-methionine = 2'-O-methylguanosine(2251) in 23S rRNA + S-adenosyl-L-homocysteine + H(+). Functionally, specifically methylates the ribose of guanosine 2251 in 23S rRNA. The polypeptide is 23S rRNA (guanosine-2'-O-)-methyltransferase RlmB (Nitrosomonas europaea (strain ATCC 19718 / CIP 103999 / KCTC 2705 / NBRC 14298)).